We begin with the raw amino-acid sequence, 375 residues long: Probable UDP-N-acetylglucosamine 2-epimerase (375 aa).

Belongs to the UDP-N-acetylglucosamine 2-epimerase family.

The protein resides in the cytoplasm. The enzyme catalyses UDP-N-acetyl-alpha-D-glucosamine = UDP-N-acetyl-alpha-D-mannosamine. It participates in glycan metabolism; exopolysaccharide EPS I biosynthesis. Functionally, may be involved in synthesis of N-acetyltrideoxygalactose, a component of exopolysaccharide EPS I which functions as a virulence factor. The polypeptide is Probable UDP-N-acetylglucosamine 2-epimerase (epsC) (Ralstonia solanacearum (Pseudomonas solanacearum)).